We begin with the raw amino-acid sequence, 373 residues long: Putative zinc finger protein 012R (373 aa).

The C2H2-type zinc finger occupies 2–29 (FECTHCDLHFESKSKLATHQKTKKCTAH).

Belongs to the IIV-6 302L family.

This is Putative zinc finger protein 012R from Invertebrate iridescent virus 3 (IIV-3).